Here is a 376-residue protein sequence, read N- to C-terminus: Non-structural protein NS2 (376 aa).

Residues 163 to 188 (EEREKGAVEQPHKPAFKTERGMNRPD) are compositionally biased toward basic and acidic residues. The segment at 163–201 (EEREKGAVEQPHKPAFKTERGMNRPDSDEDQNPAGGVVN) is disordered.

This sequence belongs to the orbivirus non-structural protein NS2 family.

Functionally, single-stranded RNA-binding protein. The polypeptide is Non-structural protein NS2 (Segment-8) (Antilocapra americana (Pronghorn)).